The sequence spans 110 residues: Protein SPIRAL1-like 2 (110 aa).

Residues 28-110 (AVNKTPAETE…LDYLFGGGSN (83 aa)) form a disordered region. Over residues 40-52 (AHAPPTQAAAANA) the composition is skewed to low complexity. The segment covering 63–82 (LNSNSANNYMRAEGQNTGNF) has biased composition (polar residues). Ser67 bears the Phosphoserine mark. The span at 95–110 (PGGGSSLDYLFGGGSN) shows a compositional bias: gly residues.

The protein belongs to the SPIRAL1 family. Ubiquitous.

Its function is as follows. Acts redundantly with SPR1 in maintaining the cortical microtubules organization essential for anisotropic cell growth. The chain is Protein SPIRAL1-like 2 (SP1L2) from Arabidopsis thaliana (Mouse-ear cress).